The chain runs to 183 residues: Dual-action ribosomal maturation protein DarP (183 aa).

Belongs to the DarP family.

It is found in the cytoplasm. Member of a network of 50S ribosomal subunit biogenesis factors which assembles along the 30S-50S interface, preventing incorrect 23S rRNA structures from forming. Promotes peptidyl transferase center (PTC) maturation. The chain is Dual-action ribosomal maturation protein DarP from Salmonella paratyphi A (strain ATCC 9150 / SARB42).